A 422-amino-acid chain; its full sequence is Beta-1,3-galactosyltransferase 2 (422 aa).

The Cytoplasmic portion of the chain corresponds to 1–24; that stretch reads MLQWRRRHCCFAKMTWNAKRSLFR. Residues 25-45 form a helical; Signal-anchor for type II membrane protein membrane-spanning segment; sequence THLIGVLSLVFLFAMFLFFNH. Residues 46-422 are Lumenal-facing; sequence HDWLPGRAGF…AGRYRHRKLH (377 aa). N-linked (GlcNAc...) asparagine glycans are attached at residues Asn75, Asn100, Asn119, Asn176, and Asn226. Positions 90–110 are disordered; it reads TLRPQTATNSNNTDLSPQGVT.

It belongs to the glycosyltransferase 31 family. Mn(2+) is required as a cofactor. In terms of tissue distribution, detected in heart and brain.

It localises to the golgi apparatus membrane. It carries out the reaction an N-acetyl-beta-D-glucosaminyl derivative + UDP-alpha-D-galactose = a beta-D-galactosyl-(1-&gt;3)-N-acetyl-beta-D-glucosaminyl derivative + UDP + H(+). The catalysed reaction is a beta-D-GlcNAc-(1-&gt;3)-beta-D-Gal-(1-&gt;4)-beta-D-Glc-(1&lt;-&gt;1)-Cer(d18:1(4E)) + UDP-alpha-D-galactose = a beta-D-Gal-(1-&gt;3)-beta-D-GlcNAc-(1-&gt;3)-beta-D-Gal-(1-&gt;4)-beta-D-Glc-(1&lt;-&gt;1')-Cer(d18:1(4E)) + UDP + H(+). The enzyme catalyses a neolactoside IV(3)-beta-GlcNAc-nLc4Cer(d18:1(4E)) + UDP-alpha-D-galactose = a neolactoside IV(3)-beta-[Gal-beta-(1-&gt;3)-GlcNAc]-nLc4Cer(d18:1(4E)) + UDP + H(+). It functions in the pathway protein modification; protein glycosylation. Beta-1,3-galactosyltransferase that transfers galactose from UDP-galactose to substrates with a terminal beta-N-acetylglucosamine (beta-GlcNAc) residue. Can also utilize substrates with a terminal galactose residue, albeit with lower efficiency. Involved in the biosynthesis of the carbohydrate moieties of glycolipids and glycoproteins. Inactive towards substrates with terminal alpha-N-acetylglucosamine (alpha-GlcNAc) or alpha-N-acetylgalactosamine (alpha-GalNAc) residues. In Homo sapiens (Human), this protein is Beta-1,3-galactosyltransferase 2.